We begin with the raw amino-acid sequence, 265 residues long: Adenosylcobinamide-GDP ribazoletransferase (265 aa).

The next 7 membrane-spanning stretches (helical) occupy residues 40-60 (IAYA…VVLV), 67-87 (LPAF…TGAF), 121-141 (GGCA…ALVA), 150-170 (LALV…LLAL), 191-211 (LACA…GFGI), 213-233 (TAFA…RLSG), and 243-263 (VAGA…LIFP).

This sequence belongs to the CobS family. Mg(2+) serves as cofactor.

It is found in the cell inner membrane. It catalyses the reaction alpha-ribazole + adenosylcob(III)inamide-GDP = adenosylcob(III)alamin + GMP + H(+). It carries out the reaction alpha-ribazole 5'-phosphate + adenosylcob(III)inamide-GDP = adenosylcob(III)alamin 5'-phosphate + GMP + H(+). It functions in the pathway cofactor biosynthesis; adenosylcobalamin biosynthesis; adenosylcobalamin from cob(II)yrinate a,c-diamide: step 7/7. Joins adenosylcobinamide-GDP and alpha-ribazole to generate adenosylcobalamin (Ado-cobalamin). Also synthesizes adenosylcobalamin 5'-phosphate from adenosylcobinamide-GDP and alpha-ribazole 5'-phosphate. This chain is Adenosylcobinamide-GDP ribazoletransferase, found in Xanthobacter autotrophicus (strain ATCC BAA-1158 / Py2).